Reading from the N-terminus, the 1121-residue chain is Solute carrier family 38 member 10 (1121 aa).

The next 10 membrane-spanning stretches (helical) occupy residues Ala-4 to Val-24, Ile-36 to Val-58, Leu-84 to Ile-104, Val-120 to Leu-140, Phe-153 to Leu-173, Ile-229 to Tyr-249, Met-272 to Cys-292, Ala-323 to Glu-343, Ile-345 to Ile-365, and Val-378 to Ser-398. Disordered regions lie at residues Val-434–Gly-691, Lys-731–Gly-904, and Ile-965–Pro-1068. Basic and acidic residues-rich tracts occupy residues Glu-439–Leu-454, Pro-466–Gln-475, Glu-493–Val-508, and Asp-544–Lys-559. Ser-612 is modified (phosphoserine). Basic and acidic residues-rich tracts occupy residues Asp-645 to Pro-659, Glu-668 to Gly-679, Lys-731 to Pro-752, Glu-763 to Met-773, Ser-802 to Gly-811, and Pro-863 to Glu-876. Position 772 is a phosphothreonine (Thr-772). Ser-802 carries the phosphoserine modification. Ser-890 and Ser-966 each carry phosphoserine. Residues His-976–Val-998 are compositionally biased toward basic and acidic residues. Ser-999 bears the Phosphoserine mark. Basic and acidic residues-rich tracts occupy residues Asp-1035–Lys-1044 and Asp-1057–Pro-1068.

The protein belongs to the amino acid/polyamine transporter 2 family.

Its subcellular location is the membrane. The enzyme catalyses L-glutamate(out) = L-glutamate(in). The catalysed reaction is L-glutamine(out) = L-glutamine(in). It catalyses the reaction L-alanine(in) = L-alanine(out). It carries out the reaction L-serine(in) = L-serine(out). The enzyme catalyses L-leucine(in) = L-leucine(out). Facilitates bidirectional transport of amino acids. May act as a glutamate sensor that regulates glutamate-glutamine cycle and mTOR signaling in the brain. The transport mechanism remains to be elucidated. In Pongo abelii (Sumatran orangutan), this protein is Solute carrier family 38 member 10.